Here is a 280-residue protein sequence, read N- to C-terminus: uncharacterized protein (280 aa).

3 to 29 is an NADP(+) binding site; the sequence is KKIAIVTGASSGFGLLAAVKLARSFFV. Substrate is bound at residue Ser-139. Tyr-152 functions as the Proton acceptor in the catalytic mechanism.

This sequence belongs to the short-chain dehydrogenases/reductases (SDR) family.

This is an uncharacterized protein from Bacillus subtilis (strain 168).